Here is a 219-residue protein sequence, read N- to C-terminus: MTDHRTRFLQLALDADALRFGEFTLKSGRLSPYFFNAGRFDSGAKTAQLAQCYADAIDAAGLDFDLLFGPAYKGIPLATALACAYAGRGRDLPLAFNRKEAKDHGEGGTLIGAPLAGRKVLIVDDVITAGTAIREALAIIRAAGGMPSGIVVALDRQEIASDQDRRSAAQAVAAEAGIPVIAVANLGDLLAFAAGNADLVGFQEPLLAYRGRYGTDTTG.

K26 contacts 5-phospho-alpha-D-ribose 1-diphosphate. 34 to 35 (FF) is an orotate binding site. 5-phospho-alpha-D-ribose 1-diphosphate contacts are provided by residues 72 to 73 (YK), R98, K99, K102, H104, and 124 to 132 (DDVITAGTA). 2 residues coordinate orotate: T128 and R156.

This sequence belongs to the purine/pyrimidine phosphoribosyltransferase family. PyrE subfamily. As to quaternary structure, homodimer. It depends on Mg(2+) as a cofactor.

The enzyme catalyses orotidine 5'-phosphate + diphosphate = orotate + 5-phospho-alpha-D-ribose 1-diphosphate. Its pathway is pyrimidine metabolism; UMP biosynthesis via de novo pathway; UMP from orotate: step 1/2. Its function is as follows. Catalyzes the transfer of a ribosyl phosphate group from 5-phosphoribose 1-diphosphate to orotate, leading to the formation of orotidine monophosphate (OMP). The chain is Orotate phosphoribosyltransferase from Xanthomonas euvesicatoria pv. vesicatoria (strain 85-10) (Xanthomonas campestris pv. vesicatoria).